The primary structure comprises 376 residues: C2H2 type master regulator of conidiophore development brlA (376 aa).

Over residues 20-29 the composition is skewed to low complexity; that stretch reads TSFSSASSSA. Disordered regions lie at residues 20–47, 197–229, and 241–267; these read TSFS…ELSL, HHHH…ASPN, and EAQR…PESG. Polar residues predominate over residues 34–44; it reads TPSSRRSTPNE. Basic residues predominate over residues 197–209; sequence HHHHHNHHQHHHA. The span at 219–229 shows a compositional bias: polar residues; that stretch reads QLHSNTGASPN. A compositionally biased stretch (basic and acidic residues) spans 241–256; it reads EAQRKTSELQRAQIRE. Residues 277–301 form a C2H2-type 1; degenerate zinc finger; it reads CKCDYPGCNKAFRRNEHLKRHKQTF. The C2H2-type 2 zinc finger occupies 309 to 332; sequence FSCEFCGKDQFNRQDNLNNHRKLH. The interval 351-376 is disordered; sequence IIEHEERSRKRRAPPKSKAEKRDYDF. The span at 367 to 376 shows a compositional bias: basic and acidic residues; sequence SKAEKRDYDF.

The protein resides in the nucleus. BrlA, abaA and wetA are pivotal regulators of conidiophore development and conidium maturation. They act individually and together to regulate their own expression and that of numerous other sporulation-specific genes. Binds promoters of target genes at brlA response elements (BREs) containing the conserved sequence 5'-(C/A)(A/G)AGGG(G/A)-3'. This chain is C2H2 type master regulator of conidiophore development brlA, found in Hapsidospora chrysogena (Acremonium chrysogenum).